Here is a 352-residue protein sequence, read N- to C-terminus: Small ribosomal subunit biogenesis GTPase RsgA (352 aa).

A compositionally biased stretch (basic residues) spans 1–21 (MKKNKLSKNQHRRIQAHHQYR). The disordered stretch occupies residues 1–38 (MKKNKLSKNQHRRIQAHHQYRLHPTSLTDDKNNQLDDA). Residues 116 to 278 (FYDGIKPMAA…LIDSPGIREF (163 aa)) form the CP-type G domain. GTP is bound by residues 164–167 (NKID) and 218–226 (GQSGVGKSS). Zn(2+) is bound by residues C302, C307, H309, and C315.

The protein belongs to the TRAFAC class YlqF/YawG GTPase family. RsgA subfamily. In terms of assembly, monomer. Associates with 30S ribosomal subunit, binds 16S rRNA. Zn(2+) serves as cofactor.

The protein localises to the cytoplasm. In terms of biological role, one of several proteins that assist in the late maturation steps of the functional core of the 30S ribosomal subunit. Helps release RbfA from mature subunits. May play a role in the assembly of ribosomal proteins into the subunit. Circularly permuted GTPase that catalyzes slow GTP hydrolysis, GTPase activity is stimulated by the 30S ribosomal subunit. The protein is Small ribosomal subunit biogenesis GTPase RsgA of Hamiltonella defensa subsp. Acyrthosiphon pisum (strain 5AT).